The sequence spans 269 residues: Hydroxyethylthiazole kinase (269 aa).

Met46 is a substrate binding site. ATP-binding residues include Arg122 and Thr168. Gly195 serves as a coordination point for substrate.

The protein belongs to the Thz kinase family. The cofactor is Mg(2+).

It carries out the reaction 5-(2-hydroxyethyl)-4-methylthiazole + ATP = 4-methyl-5-(2-phosphooxyethyl)-thiazole + ADP + H(+). It functions in the pathway cofactor biosynthesis; thiamine diphosphate biosynthesis; 4-methyl-5-(2-phosphoethyl)-thiazole from 5-(2-hydroxyethyl)-4-methylthiazole: step 1/1. In terms of biological role, catalyzes the phosphorylation of the hydroxyl group of 4-methyl-5-beta-hydroxyethylthiazole (THZ). The sequence is that of Hydroxyethylthiazole kinase from Geobacillus kaustophilus (strain HTA426).